The chain runs to 1365 residues: DNA-directed RNA polymerase subunit beta'' (1365 aa).

The Zn(2+) site is built by C224, C295, C302, and C305.

The protein belongs to the RNA polymerase beta' chain family. RpoC2 subfamily. In terms of assembly, in plastids the minimal PEP RNA polymerase catalytic core is composed of four subunits: alpha, beta, beta', and beta''. When a (nuclear-encoded) sigma factor is associated with the core the holoenzyme is formed, which can initiate transcription. It depends on Zn(2+) as a cofactor.

The protein resides in the plastid. The protein localises to the chloroplast. It carries out the reaction RNA(n) + a ribonucleoside 5'-triphosphate = RNA(n+1) + diphosphate. Functionally, DNA-dependent RNA polymerase catalyzes the transcription of DNA into RNA using the four ribonucleoside triphosphates as substrates. This is DNA-directed RNA polymerase subunit beta'' from Fagopyrum esculentum subsp. ancestrale (Wild buckwheat).